Consider the following 345-residue polypeptide: Probable G-protein coupled receptor 139 (345 aa).

The Extracellular portion of the chain corresponds to 1 to 21 (MEHTHAHLAANSSACGLGFVP). Residue Asn11 is glycosylated (N-linked (GlcNAc...) asparagine). Residues 22–42 (VVYYSFLLCLGLPANILTVII) traverse the membrane as a helical segment. The Cytoplasmic portion of the chain corresponds to 43–57 (LSQLVARRQKSSYNY). Residues 58–78 (LLALAAADILVLFFIVFVDFL) traverse the membrane as a helical segment. At 79–94 (LEDFILTMQMPLIPDK) the chain is on the extracellular side. A helical transmembrane segment spans residues 95–115 (IIEVLEFSSIHTSIWITVPLT). Over 116–140 (VDRYIAVCHPLKYHTVSYPARTRKV) the chain is Cytoplasmic. The chain crosses the membrane as a helical span at residues 141–161 (ILSVYITCFLTSIPYYWWPNI). Topologically, residues 162–173 (WTEDYISTSMHH) are extracellular. The helical transmembrane segment at 174–194 (VLVWIHCFTVYLVPCSIFFIL) threads the bilayer. Residues 195–220 (NSIIVYKLRRKSNFRLRGYSTGKTTA) are Cytoplasmic-facing. The helical transmembrane segment at 221–241 (ILFTITSIFATLWAPRIIMIL) threads the bilayer. The Extracellular portion of the chain corresponds to 242–260 (YHLYGAPIQNPWLVHIMLD). Residues 261–281 (VANMLALLNTAINFFLYCFIS) traverse the membrane as a helical segment. Topologically, residues 282–345 (KRFRTMAAAT…KHGKPIKVSP (64 aa)) are cytoplasmic.

It belongs to the G-protein coupled receptor 1 family. Expressed almost exclusively in the brain. Abundantly expressed in the ventrolateral region of caudate putamen, the habenular nucleus, the zona incerta, and the medial mammillary nucleus.

It is found in the cell membrane. Functionally, orphan receptor. Seems to act through a G(q/11)-mediated pathway. In Mus musculus (Mouse), this protein is Probable G-protein coupled receptor 139 (Gpr139).